Here is a 153-residue protein sequence, read N- to C-terminus: Ribosome maturation factor RimP (153 aa).

It belongs to the RimP family.

It localises to the cytoplasm. Required for maturation of 30S ribosomal subunits. The chain is Ribosome maturation factor RimP from Clostridium botulinum (strain Langeland / NCTC 10281 / Type F).